Reading from the N-terminus, the 232-residue chain is Ribose-5-phosphate isomerase A (232 aa).

Substrate is bound by residues 31–34 (TGST), 88–91 (DGAD), and 101–104 (KGGG). Glu110 functions as the Proton acceptor in the catalytic mechanism. Lys128 contributes to the substrate binding site.

It belongs to the ribose 5-phosphate isomerase family. Homodimer.

The enzyme catalyses aldehydo-D-ribose 5-phosphate = D-ribulose 5-phosphate. Its pathway is carbohydrate degradation; pentose phosphate pathway; D-ribose 5-phosphate from D-ribulose 5-phosphate (non-oxidative stage): step 1/1. Catalyzes the reversible conversion of ribose-5-phosphate to ribulose 5-phosphate. The chain is Ribose-5-phosphate isomerase A from Lactobacillus gasseri (strain ATCC 33323 / DSM 20243 / BCRC 14619 / CIP 102991 / JCM 1131 / KCTC 3163 / NCIMB 11718 / NCTC 13722 / AM63).